We begin with the raw amino-acid sequence, 439 residues long: tRNA(Ile)-lysidine synthase (439 aa).

25 to 30 (SGGLDS) serves as a coordination point for ATP.

It belongs to the tRNA(Ile)-lysidine synthase family.

The protein resides in the cytoplasm. The enzyme catalyses cytidine(34) in tRNA(Ile2) + L-lysine + ATP = lysidine(34) in tRNA(Ile2) + AMP + diphosphate + H(+). Ligates lysine onto the cytidine present at position 34 of the AUA codon-specific tRNA(Ile) that contains the anticodon CAU, in an ATP-dependent manner. Cytidine is converted to lysidine, thus changing the amino acid specificity of the tRNA from methionine to isoleucine. The protein is tRNA(Ile)-lysidine synthase of Edwardsiella ictaluri (strain 93-146).